Reading from the N-terminus, the 477-residue chain is tRNA-2-methylthio-N(6)-dimethylallyladenosine synthase (477 aa).

Positions 3–120 constitute an MTTase N-terminal domain; the sequence is KKLHIKTWGC…LPAMIKQVQE (118 aa). [4Fe-4S] cluster is bound by residues Cys12, Cys49, Cys83, Cys157, Cys161, and Cys164. The region spanning 143–375 is the Radical SAM core domain; the sequence is RAEGATAFVS…QHVINNQSMQ (233 aa). One can recognise a TRAM domain in the interval 378–441; it reads RAMLGSTQRI…PNSLRGRFIR (64 aa).

This sequence belongs to the methylthiotransferase family. MiaB subfamily. Monomer. The cofactor is [4Fe-4S] cluster.

The protein localises to the cytoplasm. It carries out the reaction N(6)-dimethylallyladenosine(37) in tRNA + (sulfur carrier)-SH + AH2 + 2 S-adenosyl-L-methionine = 2-methylsulfanyl-N(6)-dimethylallyladenosine(37) in tRNA + (sulfur carrier)-H + 5'-deoxyadenosine + L-methionine + A + S-adenosyl-L-homocysteine + 2 H(+). Its function is as follows. Catalyzes the methylthiolation of N6-(dimethylallyl)adenosine (i(6)A), leading to the formation of 2-methylthio-N6-(dimethylallyl)adenosine (ms(2)i(6)A) at position 37 in tRNAs that read codons beginning with uridine. In Aeromonas salmonicida (strain A449), this protein is tRNA-2-methylthio-N(6)-dimethylallyladenosine synthase.